Reading from the N-terminus, the 506-residue chain is uncharacterized protein (506 aa).

It belongs to the Mg-chelatase subunits D/I family. ComM subfamily.

This is an uncharacterized protein from Escherichia coli (strain K12).